We begin with the raw amino-acid sequence, 969 residues long: RNA polymerase-associated protein RapA (969 aa).

Residues 164–334 form the Helicase ATP-binding domain; the sequence is EVGRRHAPRV…FARLRLLDPD (171 aa). An ATP-binding site is contributed by 177-184; it reads DEVGLGKT. The DEAH box signature appears at 280-283; that stretch reads DEAH. The 155-residue stretch at 492-646 folds into the Helicase C-terminal domain; the sequence is RVNWLLEKVK…TCPTGRAVYD (155 aa).

The protein belongs to the SNF2/RAD54 helicase family. RapA subfamily. As to quaternary structure, interacts with the RNAP. Has a higher affinity for the core RNAP than for the holoenzyme. Its ATPase activity is stimulated by binding to RNAP.

Transcription regulator that activates transcription by stimulating RNA polymerase (RNAP) recycling in case of stress conditions such as supercoiled DNA or high salt concentrations. Probably acts by releasing the RNAP, when it is trapped or immobilized on tightly supercoiled DNA. Does not activate transcription on linear DNA. Probably not involved in DNA repair. The chain is RNA polymerase-associated protein RapA from Vibrio campbellii (strain ATCC BAA-1116).